Reading from the N-terminus, the 340-residue chain is Phenylalanine--tRNA ligase alpha subunit (340 aa).

E255 lines the Mg(2+) pocket.

Belongs to the class-II aminoacyl-tRNA synthetase family. Phe-tRNA synthetase alpha subunit type 1 subfamily. As to quaternary structure, tetramer of two alpha and two beta subunits. Requires Mg(2+) as cofactor.

It localises to the cytoplasm. The catalysed reaction is tRNA(Phe) + L-phenylalanine + ATP = L-phenylalanyl-tRNA(Phe) + AMP + diphosphate + H(+). In Syntrophomonas wolfei subsp. wolfei (strain DSM 2245B / Goettingen), this protein is Phenylalanine--tRNA ligase alpha subunit.